Consider the following 353-residue polypeptide: Polycomb group RING finger protein 6 (353 aa).

Residues 1–116 form a disordered region; sequence MDEAETDATE…FSLRLESGRA (116 aa). Residues 9-19 are compositionally biased toward basic and acidic residues; that stretch reads TENKRASEAKR. Residues 23–39 show a composition bias toward pro residues; it reads MPPPPPPPPPISPPALI. A Phosphoserine modification is found at S34. A compositionally biased stretch (low complexity) spans 40-52; sequence PAPAAGEEGPASL. Residues 69 to 82 are compositionally biased toward basic and acidic residues; sequence EPERSLGRLRGRFE. Positions 71–112 form a coiled coil; it reads ERSLGRLRGRFEDYDEELEEEEEMEEEEEEEEEMSHFSLRLE. Positions 83-103 are enriched in acidic residues; the sequence is DYDEELEEEEEMEEEEEEEEE. A Phosphoserine modification is found at S118. An RING-type zinc finger spans residues 137-176; that stretch reads CSICKGYLIDATTITECLHTFCKSCIVRHFYYSNRCPKCN. Residues K226 and K237 each participate in a glycyl lysine isopeptide (Lys-Gly) (interchain with G-Cter in SUMO2) cross-link.

Component of a PRC1-like complex. Interacts with BMI1/PCGF4, RING1 and RNF2. Interacts with KDM5D. Interacts with CBX4, CBX6, CBX7 and CBX8. In terms of processing, phosphorylated during mitosis. Expressed in ovary, testis, stomach, liver, thymus and kidney (at protein level).

The protein resides in the nucleus. Functionally, transcriptional repressor. May modulate the levels of histone H3K4Me3 by activating KDM5D histone demethylase. Component of a Polycomb group (PcG) multiprotein PRC1-like complex, a complex class required to maintain the transcriptionally repressive state of many genes, including Hox genes, throughout development. PcG PRC1 complex acts via chromatin remodeling and modification of histones; it mediates monoubiquitination of histone H2A 'Lys-119', rendering chromatin heritably changed in its expressibility. Within the PRC1-like complex, regulates RNF2 ubiquitin ligase activity. This chain is Polycomb group RING finger protein 6 (Pcgf6), found in Mus musculus (Mouse).